A 210-amino-acid polypeptide reads, in one-letter code: MARRSQGTKLHLAVLCLVVSCHAIGLSDLMERASQRSDKLHSLSTSLNKDLDSHFPPMGRVMMPRPSMCHTSSLQIPKDKEQALRVSENELISLARSLLLAWNDPLLLLSSEAPTLPHPSNGDISSKIRELQDYSKSLGDGLDILVNKMGPSSQYISLIPFKGGDLGNDKTSRLINFHFLMSCFRRDSHKIDSFLKVLRCRATKMRPETC.

The N-terminal stretch at 1 to 23 is a signal peptide; sequence MARRSQGTKLHLAVLCLVVSCHA. 2 cysteine pairs are disulfide-bonded: C69–C183 and C200–C210.

It belongs to the somatotropin/prolactin family.

It is found in the secreted. The chain is Prolactin-2 (prl2) from Oncorhynchus tshawytscha (Chinook salmon).